Reading from the N-terminus, the 199-residue chain is dITP/XTP pyrophosphatase (199 aa).

7–12 (SNNRGK) provides a ligand contact to substrate. Residues D39 and D68 each contribute to the Mg(2+) site. D68 (proton acceptor) is an active-site residue. Residues A69, 154 to 157 (FGFD), K177, and 182 to 183 (HR) each bind substrate.

Belongs to the HAM1 NTPase family. As to quaternary structure, homodimer. Mg(2+) serves as cofactor.

It carries out the reaction XTP + H2O = XMP + diphosphate + H(+). It catalyses the reaction dITP + H2O = dIMP + diphosphate + H(+). The enzyme catalyses ITP + H2O = IMP + diphosphate + H(+). Pyrophosphatase that catalyzes the hydrolysis of nucleoside triphosphates to their monophosphate derivatives, with a high preference for the non-canonical purine nucleotides XTP (xanthosine triphosphate), dITP (deoxyinosine triphosphate) and ITP. Seems to function as a house-cleaning enzyme that removes non-canonical purine nucleotides from the nucleotide pool, thus preventing their incorporation into DNA/RNA and avoiding chromosomal lesions. This is dITP/XTP pyrophosphatase from Paracidovorax citrulli (strain AAC00-1) (Acidovorax citrulli).